The sequence spans 208 residues: Dephospho-CoA kinase (208 aa).

In terms of domain architecture, DPCK spans 8–208; it reads LVGVTGGIGS…VYQSLLTVVE (201 aa). ATP is bound at residue 16 to 21; sequence GSGKST.

Belongs to the CoaE family.

The protein resides in the cytoplasm. It carries out the reaction 3'-dephospho-CoA + ATP = ADP + CoA + H(+). Its pathway is cofactor biosynthesis; coenzyme A biosynthesis; CoA from (R)-pantothenate: step 5/5. Its function is as follows. Catalyzes the phosphorylation of the 3'-hydroxyl group of dephosphocoenzyme A to form coenzyme A. The protein is Dephospho-CoA kinase of Chlorobaculum tepidum (strain ATCC 49652 / DSM 12025 / NBRC 103806 / TLS) (Chlorobium tepidum).